The following is a 645-amino-acid chain: Sentrin-specific protease 1 (645 aa).

Residues 1–200 (MDDIADRMRM…REIYRQLLQM (200 aa)) form an interaction with CCAR2 region. Residues Ser-57, Ser-117, and Ser-157 each carry the phosphoserine modification. The disordered stretch occupies residues 92–117 (QSANGQWRNSTPSSSSSLQKSRNSRS). Over residues 99–117 (RNSTPSSSSSLQKSRNSRS) the composition is skewed to low complexity. Positions 171 to 177 (PKKTQRR) match the Nuclear localization signal motif. The disordered stretch occupies residues 285-313 (KDSGTLHHPHHHHSVPHQPDNLAASNTQS). 2 protease regions span residues 451–614 (LTIT…YADC) and 451–615 (LTIT…ADCI). Catalysis depends on residues His-534 and Asp-551. The Nuclear localization signal motif lies at 575–578 (KKRK). The active-site Nucleophile is the Cys-604. A Nuclear localization signal motif is present at residues 629–635 (PYFRKRM). The Nuclear export signal motif lies at 636 to 645 (VWEILHRKLL).

This sequence belongs to the peptidase C48 family. As to quaternary structure, interacts with RBM33; promoting ALKBH5 desumoylation and subsequent activation.

Its subcellular location is the nucleus. The protein resides in the cytoplasm. Functionally, protease that catalyzes two essential functions in the SUMO pathway. The first is the hydrolysis of an alpha-linked peptide bond at the C-terminal end of the small ubiquitin-like modifier (SUMO) propeptides, SUMO1, SUMO2 and SUMO3 leading to the mature form of the proteins. The second is the deconjugation of SUMO1, SUMO2 and SUMO3 from targeted proteins, by cleaving an epsilon-linked peptide bond between the C-terminal glycine of the mature SUMO and the lysine epsilon-amino group of the target protein. Deconjugates SUMO1 from HIPK2. Deconjugates SUMO1 from HDAC1 and BHLHE40/DEC1, which decreases its transcriptional repression activity. Deconjugates SUMO1 from CLOCK, which decreases its transcriptional activation activity. Deconjugates SUMO2 from MTA1. Inhibits N(6)-methyladenosine (m6A) RNA methylation by mediating SUMO1 deconjugation from METTL3 and ALKBH5: METTL3 inhibits the m6A RNA methyltransferase activity, while ALKBH5 desumoylation promotes m6A demethylation. Desumoylates CCAR2 which decreases its interaction with SIRT1. Deconjugates SUMO1 from GPS2. This is Sentrin-specific protease 1 (SENP1) from Pongo abelii (Sumatran orangutan).